The following is a 458-amino-acid chain: Fasciclin-like arabinogalactan protein 17 (458 aa).

Residues 1–30 (MDRRIYGGSAVIHLFLFFSVLIFSAASALS) form the signal peptide. Residues 43 to 184 (NSNSVLVALL…GLIHGIERLL (142 aa)) form the FAS1 1 domain. N80 carries N-linked (GlcNAc...) asparagine glycosylation. The interval 207-262 (PEGAPEVDPRTNRLKKPAAPVPAGSPPALPIQSAMAPGPSLAPAPAPGPGGKQHHF) is disordered. Pro residues predominate over residues 225-235 (APVPAGSPPAL). Residues 268 to 411 (VKDFIHTLLH…ISVQGIDGVL (144 aa)) enclose the FAS1 2 domain. An N-linked (GlcNAc...) asparagine glycan is attached at N290.

It belongs to the fasciclin-like AGP family.

Its subcellular location is the secreted. In terms of biological role, may be a cell surface adhesion protein. The chain is Fasciclin-like arabinogalactan protein 17 (FLA17) from Arabidopsis thaliana (Mouse-ear cress).